The following is a 63-amino-acid chain: MKAQDLRQKSVDELNQELLGLLREQFNMRMQASTGQLAQTHTLKQVRRDVARIKTVLTEKAGA.

The protein belongs to the universal ribosomal protein uL29 family.

This Aeromonas salmonicida (strain A449) protein is Large ribosomal subunit protein uL29.